The sequence spans 1089 residues: MDDGRKKELHDLNTRAWNGEEVFPLKSKKLDSSIKRNTGFIKKLKKGFVKGSESSLLKDLSEASLEKYLSEIIVTVTECLLNVLNKNDDVIAAVEIISGLHQRFNGRFTSPLLGAFLQAFENPSVDIESERDELQRITRVKGNLRVFTELYLVGVFRTLDDIESKDAIPNFLQKKTGRKDPLLFSILREILNYKFKLGFTTTIATAFIKKFAPLFRDDDNSWDDLIYDSKLKGALQSLFKNFIDATFARATELHKKVNKLQREHQKCQIRTGKLRDEYVEEYDKLLPIFIRFKTSAITLGEFFKLEIPELEGASNDDLKETASPMITNQILPPNQRLWENEDTRKFYEILPDISKTVEESQSSKTEKDSNVNSKNINLFFTDLEMADCKDIIDDLSNRYWSSYLDNKATRNRILKFFMETQDWSKLPVYSRFIATNSKYMPEIVSEFINYLDNGFRSQLHSNKINVKNIIFFSEMIKFQLIPSFMIFHKIRTLIMYMQVPNNVEILTVLLEHSGKFLLNKPEYKELMEKMVQLIKDKKNDRQLNMNMKSALENIITLLYPPSVKSLNVTVKTITPEQQFYRILIRSELSSLDFKHIVKLVRKAHWDDVAIQKVLFSLFSKPHKISYQNIPLLTKVLGGLYSYRRDFVIRCIDQVLENIERGLEINDYGQNMHRISNVRYLTEIFNFEMIKSDVLLDTIYHIIRFGHINNQPNPFYLNYSDPPDNYFRIQLVTTILLNINRTPAAFTKKCKLLLRFFEYYTFIKEQPLPKETEFRVSSTFKKYENIFGNTKFERSENLVESASRLESLLKSLNAIKSKDDRVKGSSASIHNGKESAVPIESITEDDEDEDDENDDGVDLLGEDEDAEISTPNTESAPGKHQAKQDESEDEDDEDDDEDDDDDDDDDDDDGEEGDEDDDEDDDDEDDDDEEEEDSDSDLEYGGDLDADRDIEMKRMYEEYERKLKDEEERKAEEELERQFQKMMQESIDARKSEKVVASKIPVISKPVSVQKPLLLKKSEEPSSSKETYEELSKPKKIAFTFLTKSGKKTQSRILQLPTDVKFVSDVLEEEEKLKTERNKIKKIVLKRSFD.

A disordered region spans residues 819-951 (DRVKGSSASI…DLDADRDIEM (133 aa)). Composition is skewed to acidic residues over residues 841–866 (ITED…EDAE) and 885–943 (ESED…GGDL).

The protein localises to the cytoplasm. In terms of biological role, involved in nonsense-mediated decay of mRNAs containing premature stop codons. It interacts, via its C-terminus, with NAM7/UPF1. Could be involved in determining the efficiency of translational termination or reinitiation or factors involved in the initial assembly of an initiation- and termination-competent mRNP. The protein is Nonsense-mediated mRNA decay protein 2 (NMD2) of Saccharomyces cerevisiae (strain ATCC 204508 / S288c) (Baker's yeast).